We begin with the raw amino-acid sequence, 414 residues long: eIF5-mimic protein 1 (414 aa).

A disordered region spans residues 1–22 (MNKNQKPVLTGQRFKTRKRDEK). The region spanning 248–414 (VQQSLGTRKE…LQNAEEEFRI (167 aa)) is the W2 domain.

Belongs to the BZW family.

It localises to the cytoplasm. In terms of biological role, translation initiation regulator which may repress non-AUG initiated translation and repeat-associated non-AUG (RAN) initiated translation by acting as a competitive inhibitor of eukaryotic translation initiation factor 5 (EIF5) function. This Gallus gallus (Chicken) protein is eIF5-mimic protein 1 (BZW2).